Here is a 362-residue protein sequence, read N- to C-terminus: MSKNIVVLPGDHVGKEVTDEAIKVLNAIAEVRPEIKFNFQHHLIGGAAIDATGTPLPDEALEASKKADAVLLGAVGGPKWGTGAVRPEQGLLKIRKELGLYANLRPCNFASDSLLDLSPLKPEYAKGTDFVVVRELVGGIYFGERKEDEGDGVAWDSEKYSVPEVQRITRMAAFLALQQNPPLPIWSLDKANVLASSRLWRKTVEETIKTEFPQLTVQHQLIDSAAMILVKSPTKLNGVVITNNMFGDIISDEASVIPGSLGLLPSASLASLPDTNKAFGLYEPCHGSAPDLPANKVNPIATILSAAMMLKLSLDLVEEGRALEEAVRNVLDAGVRTGDLGGSNSTTEVGDAIAKAVKEILA.

NAD(+) is bound at residue 77-88 (GPKWGTGAVRPE). The substrate site is built by R95, R105, R134, and D223. 3 residues coordinate Mg(2+): D223, D248, and D252. 287 to 298 (GSAPDLPANKVN) provides a ligand contact to NAD(+).

Belongs to the isocitrate and isopropylmalate dehydrogenases family. As to quaternary structure, homodimer. Mg(2+) serves as cofactor. Requires Mn(2+) as cofactor.

It localises to the cytoplasm. It carries out the reaction (2R,3S)-3-isopropylmalate + NAD(+) = 4-methyl-2-oxopentanoate + CO2 + NADH. It participates in amino-acid biosynthesis; L-leucine biosynthesis; L-leucine from 3-methyl-2-oxobutanoate: step 3/4. Functionally, catalyzes the oxidation of 3-carboxy-2-hydroxy-4-methylpentanoate (3-isopropylmalate) to 3-carboxy-4-methyl-2-oxopentanoate. The product decarboxylates to 4-methyl-2 oxopentanoate. The sequence is that of 3-isopropylmalate dehydrogenase (LEU2) from Kluyveromyces lactis (strain ATCC 8585 / CBS 2359 / DSM 70799 / NBRC 1267 / NRRL Y-1140 / WM37) (Yeast).